The sequence spans 60 residues: Large ribosomal subunit protein bL32 (60 aa).

It belongs to the bacterial ribosomal protein bL32 family.

The polypeptide is Large ribosomal subunit protein bL32 (Streptococcus gordonii (strain Challis / ATCC 35105 / BCRC 15272 / CH1 / DL1 / V288)).